The following is a 514-amino-acid chain: Histidine ammonia-lyase (514 aa).

The segment at residues 143–145 is a cross-link (5-imidazolinone (Ala-Gly)); it reads ASG. A 2,3-didehydroalanine (Ser) modification is found at S144.

This sequence belongs to the PAL/histidase family. Contains an active site 4-methylidene-imidazol-5-one (MIO), which is formed autocatalytically by cyclization and dehydration of residues Ala-Ser-Gly.

It is found in the cytoplasm. The enzyme catalyses L-histidine = trans-urocanate + NH4(+). It participates in amino-acid degradation; L-histidine degradation into L-glutamate; N-formimidoyl-L-glutamate from L-histidine: step 1/3. The chain is Histidine ammonia-lyase from Photorhabdus laumondii subsp. laumondii (strain DSM 15139 / CIP 105565 / TT01) (Photorhabdus luminescens subsp. laumondii).